The sequence spans 284 residues: RNase adapter protein RapZ (284 aa).

8 to 15 (GRSGSGKS) is an ATP binding site. 56 to 59 (DVRN) lines the GTP pocket. The interval 266-284 (RSRGKNVQSRHRTLEKRKQ) is RNA-binding.

Belongs to the RapZ-like family. RapZ subfamily. Homotrimer.

Functionally, modulates the synthesis of GlmS, by affecting the processing and stability of the regulatory small RNA GlmZ. When glucosamine-6-phosphate (GlcN6P) concentrations are high in the cell, RapZ binds GlmZ and targets it to cleavage by RNase E. Consequently, GlmZ is inactivated and unable to activate GlmS synthesis. Under low GlcN6P concentrations, RapZ is sequestered and inactivated by an other regulatory small RNA, GlmY, preventing GlmZ degradation and leading to synthesis of GlmS. The sequence is that of RNase adapter protein RapZ from Serratia proteamaculans (strain 568).